We begin with the raw amino-acid sequence, 328 residues long: N-acyl-aromatic-L-amino acid amidohydrolase (carboxylate-forming) A (328 aa).

Zn(2+) contacts are provided by histidine 30 and glutamate 33. Substrate-binding positions include arginine 74 and 81-82 (NR). Histidine 127 lines the Zn(2+) pocket. Positions 189 and 300 each coordinate substrate.

It belongs to the AspA/AstE family. Aspartoacylase subfamily. Homotetramer. Zn(2+) is required as a cofactor.

The protein resides in the apical cell membrane. The protein localises to the cytoplasm. It carries out the reaction an N-acyl-aromatic L-alpha-amino acid + H2O = an aromatic L-alpha-amino acid + a carboxylate. The enzyme catalyses an N-acetyl-L-cysteine-S-conjugate + H2O = an S-substituted L-cysteine + acetate. In terms of biological role, plays an important role in deacetylating mercapturic acids in kidney proximal tubules. The polypeptide is N-acyl-aromatic-L-amino acid amidohydrolase (carboxylate-forming) A (acy3.1) (Danio rerio (Zebrafish)).